We begin with the raw amino-acid sequence, 238 residues long: Large ribosomal subunit protein uL2 (238 aa).

The segment at 197–219 is disordered; sequence ASDHPFGGKRHSNHSKPFTVSKW.

Belongs to the universal ribosomal protein uL2 family. Part of the 50S ribosomal subunit. Forms a bridge to the 30S subunit in the 70S ribosome.

Functionally, one of the primary rRNA binding proteins. Required for association of the 30S and 50S subunits to form the 70S ribosome, for tRNA binding and peptide bond formation. It has been suggested to have peptidyltransferase activity; this is somewhat controversial. Makes several contacts with the 16S rRNA in the 70S ribosome. This is Large ribosomal subunit protein uL2 from Nanoarchaeum equitans (strain Kin4-M).